A 238-amino-acid polypeptide reads, in one-letter code: Protein shisa-3 homolog (238 aa).

Positions 1-21 (MRALLALCLLLGWLRWGPAGA) are cleaved as a signal peptide. The Lumenal segment spans residues 22 to 98 (QQSGEYCHGW…GITAQPVYVP (77 aa)). A helical transmembrane segment spans residues 99 to 119 (FLIVGSIFIAFIILGSVVAIY). The Cytoplasmic segment spans residues 120–238 (CCTCLRPKEP…GKSCPDFSSS (119 aa)). The interval 151-173 (TSTSPRAPSRQSSTATSSSSTGG) is disordered. Residues 159 to 173 (SRQSSTATSSSSTGG) show a composition bias toward low complexity.

It belongs to the shisa family.

The protein resides in the endoplasmic reticulum membrane. In terms of biological role, plays an essential role in the maturation of presomitic mesoderm cells by individual attenuation of both FGF and WNT signaling. In Homo sapiens (Human), this protein is Protein shisa-3 homolog (SHISA3).